The primary structure comprises 364 residues: UDP-N-acetylenolpyruvoylglucosamine reductase (364 aa).

The FAD-binding PCMH-type domain occupies 30-196; that stretch reads LGGPATRLIT…LRVRFELEDA (167 aa). R173 is a catalytic residue. S252 serves as the catalytic Proton donor. E356 is an active-site residue.

This sequence belongs to the MurB family. FAD serves as cofactor.

The protein resides in the cytoplasm. It carries out the reaction UDP-N-acetyl-alpha-D-muramate + NADP(+) = UDP-N-acetyl-3-O-(1-carboxyvinyl)-alpha-D-glucosamine + NADPH + H(+). It functions in the pathway cell wall biogenesis; peptidoglycan biosynthesis. Functionally, cell wall formation. This Streptomyces avermitilis (strain ATCC 31267 / DSM 46492 / JCM 5070 / NBRC 14893 / NCIMB 12804 / NRRL 8165 / MA-4680) protein is UDP-N-acetylenolpyruvoylglucosamine reductase.